Reading from the N-terminus, the 99-residue chain is A-type ATP synthase subunit F (99 aa).

Belongs to the V-ATPase F subunit family. Has multiple subunits with at least A(3), B(3), C, D, E, F, H, I and proteolipid K(x).

Its subcellular location is the cell membrane. Component of the A-type ATP synthase that produces ATP from ADP in the presence of a proton gradient across the membrane. This chain is A-type ATP synthase subunit F, found in Methanococcus maripaludis (strain C5 / ATCC BAA-1333).